A 230-amino-acid chain; its full sequence is Probable cytokinin riboside 5'-monophosphate phosphoribohydrolase LOG4 (230 aa).

Substrate contacts are provided by residues Glu91, 109–110 (RK), and 126–132 (GYGTIEE).

Belongs to the LOG family.

The enzyme catalyses N(6)-(dimethylallyl)adenosine 5'-phosphate + H2O = N(6)-dimethylallyladenine + D-ribose 5-phosphate. It catalyses the reaction 9-ribosyl-trans-zeatin 5'-phosphate + H2O = trans-zeatin + D-ribose 5-phosphate. Functionally, cytokinin-activating enzyme working in the direct activation pathway. Phosphoribohydrolase that converts inactive cytokinin nucleotides to the biologically active free-base forms. The polypeptide is Probable cytokinin riboside 5'-monophosphate phosphoribohydrolase LOG4 (LOGL4) (Oryza sativa subsp. japonica (Rice)).